Reading from the N-terminus, the 78-residue chain is Defensin-like protein 171 (78 aa).

Residues 1-23 form the signal peptide; sequence MAKTASSLVLPIIFLVMFALVEQ. 4 disulfides stabilise this stretch: Cys27/Cys71, Cys34/Cys56, Cys40/Cys65, and Cys44/Cys67.

It belongs to the DEFL family.

Its subcellular location is the secreted. This is Defensin-like protein 171 (LCR61) from Arabidopsis thaliana (Mouse-ear cress).